An 84-amino-acid chain; its full sequence is Toxin Aah4 (84 aa).

The first 19 residues, 1–19 (MNYLIMFSLALLLVIGVES), serve as a signal peptide directing secretion. The region spanning 21-82 (RDGYIVDSKN…PIKDPSDDCH (62 aa)) is the LCN-type CS-alpha/beta domain. 4 disulfides stabilise this stretch: Cys31–Cys81, Cys35–Cys53, Cys39–Cys63, and Cys43–Cys65. Residue Arg84 is a propeptide, removed by a carboxypeptidase.

Belongs to the long (4 C-C) scorpion toxin superfamily. Sodium channel inhibitor family. Alpha subfamily. As to expression, expressed by the venom gland.

The protein resides in the secreted. In terms of biological role, alpha toxins bind voltage-independently at site-3 of sodium channels (Nav) and inhibit the inactivation of the activated channels, thereby blocking neuronal transmission. This toxin seems to specifically act on Nav1.6/SCN8A sodium channel. In vitro, it inhibits the proliferation of the prostate cancer cell line DU145 (IC(50)=15 uM). It shows low effect on the adhesion of DU145 cells to fibronectin (at 15 uM) and is inactive on DU145 cells migration. The polypeptide is Toxin Aah4 (Androctonus australis (Sahara scorpion)).